Consider the following 537-residue polypeptide: CTP synthase (537 aa).

The interval 1–269 (MNQTKYIFVT…DVVALKKLDL (269 aa)) is amidoligase domain. Serine 15 contacts CTP. Serine 15 provides a ligand contact to UTP. Residue 16–21 (SLGKGI) participates in ATP binding. Tyrosine 56 contacts L-glutamine. Aspartate 73 contacts ATP. Residues aspartate 73 and glutamate 143 each coordinate Mg(2+). CTP contacts are provided by residues 150-152 (DIE), 190-195 (KTKPTQ), and lysine 226. Residues 190–195 (KTKPTQ) and lysine 226 contribute to the UTP site. The region spanning 295 to 537 (NIGLVGKYVE…VAAAVNAHKK (243 aa)) is the Glutamine amidotransferase type-1 domain. Glycine 357 contributes to the L-glutamine binding site. Cysteine 384 functions as the Nucleophile; for glutamine hydrolysis in the catalytic mechanism. L-glutamine is bound by residues 385-388 (LGMQ), glutamate 408, and arginine 465. Active-site residues include histidine 510 and glutamate 512.

This sequence belongs to the CTP synthase family. Homotetramer.

The catalysed reaction is UTP + L-glutamine + ATP + H2O = CTP + L-glutamate + ADP + phosphate + 2 H(+). The enzyme catalyses L-glutamine + H2O = L-glutamate + NH4(+). It carries out the reaction UTP + NH4(+) + ATP = CTP + ADP + phosphate + 2 H(+). Its pathway is pyrimidine metabolism; CTP biosynthesis via de novo pathway; CTP from UDP: step 2/2. With respect to regulation, allosterically activated by GTP, when glutamine is the substrate; GTP has no effect on the reaction when ammonia is the substrate. The allosteric effector GTP functions by stabilizing the protein conformation that binds the tetrahedral intermediate(s) formed during glutamine hydrolysis. Inhibited by the product CTP, via allosteric rather than competitive inhibition. Its function is as follows. Catalyzes the ATP-dependent amination of UTP to CTP with either L-glutamine or ammonia as the source of nitrogen. Regulates intracellular CTP levels through interactions with the four ribonucleotide triphosphates. In Flavobacterium johnsoniae (strain ATCC 17061 / DSM 2064 / JCM 8514 / BCRC 14874 / CCUG 350202 / NBRC 14942 / NCIMB 11054 / UW101) (Cytophaga johnsonae), this protein is CTP synthase.